The following is a 157-amino-acid chain: Protein-export protein SecB (157 aa).

This sequence belongs to the SecB family. As to quaternary structure, homotetramer, a dimer of dimers. One homotetramer interacts with 1 SecA dimer.

It is found in the cytoplasm. One of the proteins required for the normal export of preproteins out of the cell cytoplasm. It is a molecular chaperone that binds to a subset of precursor proteins, maintaining them in a translocation-competent state. It also specifically binds to its receptor SecA. The protein is Protein-export protein SecB of Proteus mirabilis (strain HI4320).